We begin with the raw amino-acid sequence, 624 residues long: Adenine deaminase 1 (624 aa).

It belongs to the metallo-dependent hydrolases superfamily. Adenine deaminase family. Mn(2+) serves as cofactor.

It catalyses the reaction adenine + H2O + H(+) = hypoxanthine + NH4(+). The chain is Adenine deaminase 1 from Bradyrhizobium sp. (strain ORS 278).